Consider the following 166-residue polypeptide: HTH-type transcriptional regulator PecS (166 aa).

The HTH marR-type domain maps to 25-160; the sequence is PMLVIGTLSR…LRALLGRVEK (136 aa).

Its subcellular location is the cytoplasm. With respect to regulation, the presence of PecM is required to ensure the full regulation of the pecS-pecM intergenic region by PecS. In terms of biological role, negatively regulates the expression of genes encoding pectinase and cellulase, which play a major role in virulence, and the expression of the blue pigment indigoidine, which is implicated in pathogenicity and protection from oxidative stress. Represses the expression of genes involved in indigoidine biosynthesis by binding to indA and indC promoter regions. Also binds to promoter sites in the pecS-pecM intergenic region and negatively autoregulates its expression as well as that of pecM. This is HTH-type transcriptional regulator PecS from Dickeya dadantii (strain 3937) (Erwinia chrysanthemi (strain 3937)).